Here is a 511-residue protein sequence, read N- to C-terminus: Serine hydroxymethyltransferase (511 aa).

Lys-287 is modified (N6-(pyridoxal phosphate)lysine).

Belongs to the SHMT family. As to quaternary structure, homotetramer. Requires pyridoxal 5'-phosphate as cofactor.

The catalysed reaction is (6R)-5,10-methylene-5,6,7,8-tetrahydrofolate + glycine + H2O = (6S)-5,6,7,8-tetrahydrofolate + L-serine. It participates in one-carbon metabolism; tetrahydrofolate interconversion. Its function is as follows. Interconversion of serine and glycine. The chain is Serine hydroxymethyltransferase from Caenorhabditis briggsae.